The following is a 187-amino-acid chain: MSIKSDRWIRRAAEAGMIEPFEPGQVRTAGGNRIVSYGTSSYGYDVRCADEFKIFTNINSTIVDPKQFDEKSFVDFKGDVCIIPPNSFALARTVEYFRIPRSVLTICLGKSTYARCGIIVNVTPLEPEWEGHVTLEFSNTTPLPAKIYAGEGCAQMLFLESDEVCETSYRDRGGKYQGQRGVTLPRT.

DCTP is bound by residues Lys-110 to Arg-115, Thr-134 to Glu-136, Gln-155, Tyr-169, and Gln-179. The Proton donor/acceptor role is filled by Glu-136.

It belongs to the dCTP deaminase family. Homotrimer.

It carries out the reaction dCTP + H2O + H(+) = dUTP + NH4(+). It functions in the pathway pyrimidine metabolism; dUMP biosynthesis; dUMP from dCTP (dUTP route): step 1/2. Its function is as follows. Catalyzes the deamination of dCTP to dUTP. This Bordetella bronchiseptica (strain ATCC BAA-588 / NCTC 13252 / RB50) (Alcaligenes bronchisepticus) protein is dCTP deaminase.